The chain runs to 266 residues: MRLNIAPAPWPGAPVVVLSAGLGGGGGYWLAQRAALEEQYQLVSYDHNGTGENAGPLPAGYSLATMAGELFSALQAAGIARFALVGHALGALIGLQLALDRPEAVSALALVNGWLSLSPHTRRCFQVRERLLHAGGAQAWVEAQPLFLYPAEWMAARLPRLEAEDALAISHFQGKENLLKRLQALKQADFSRRASAIACPTLIISAADDLLVPASCSRVLQTAIPGSQLVEMPWGGHACNVTDADTFNTILRDGLSAMLPVARETR.

Residues 14 to 119 (PVVVLSAGLG…LVNGWLSLSP (106 aa)) form the AB hydrolase-1 domain.

Belongs to the AB hydrolase superfamily. Hydrolase RutD family.

The enzyme catalyses carbamate + 2 H(+) = NH4(+) + CO2. Involved in pyrimidine catabolism. May facilitate the hydrolysis of carbamate, a reaction that can also occur spontaneously. The polypeptide is Putative carbamate hydrolase RutD (Klebsiella pneumoniae subsp. pneumoniae (strain ATCC 700721 / MGH 78578)).